The primary structure comprises 350 residues: Vancomycin C-type resistance protein VanC2 (350 aa).

Active-site residues include E14 and S187. The region spanning 141–343 (HQAAAAIGVQ…YQELLQKLLV (203 aa)) is the ATP-grasp domain. Residue 171 to 226 (IQTHGFPVFFKPNEAGSSKGITKVTCVEEIASALKEAFTYCSAVLLQKNIAGVEIG) participates in ATP binding. D297, E310, and N312 together coordinate Mg(2+). The Mn(2+) site is built by D297, E310, and N312. S321 is a catalytic residue.

This sequence belongs to the D-alanine--D-alanine ligase family. As to quaternary structure, homodimer. The cofactor is Mg(2+). Mn(2+) is required as a cofactor.

The protein resides in the cell membrane. The catalysed reaction is D-serine + D-alanine + ATP = D-alanyl-D-serine + ADP + phosphate + H(+). Its pathway is cell wall biogenesis; peptidoglycan biosynthesis. Inhibited by D-cycloserine. Functionally, required for low-level resistance to the glycopeptide antibiotic vancomycin. D-alanine--D-alanine ligase of altered specificity, which catalyzes synthesis of D-Ala-D-Ser; produces a peptidoglycan which does not terminate in D-alanine but in D-serine, thus probably reducing affinity for vancomycin. Only insignificant catalytic synthesis of D-Ala-D-Ala in vitro. The chain is Vancomycin C-type resistance protein VanC2 from Enterococcus casseliflavus (Enterococcus flavescens).